Reading from the N-terminus, the 204-residue chain is High frequency lysogenization protein HflD homolog (204 aa).

It belongs to the HflD family.

It is found in the cytoplasm. The protein resides in the cell inner membrane. This chain is High frequency lysogenization protein HflD homolog, found in Xanthomonas euvesicatoria pv. vesicatoria (strain 85-10) (Xanthomonas campestris pv. vesicatoria).